The primary structure comprises 338 residues: UPF0284 protein TV0153 (338 aa).

It belongs to the UPF0284 family.

The polypeptide is UPF0284 protein TV0153 (Thermoplasma volcanium (strain ATCC 51530 / DSM 4299 / JCM 9571 / NBRC 15438 / GSS1)).